A 735-amino-acid chain; its full sequence is DNA replication licensing factor mcm5-B (735 aa).

An MCM domain is found at 332-538 (IYETVAKSIA…RDMTLAKHVM (207 aa)). Arginine 372 lines the ADP pocket. The short motif at 513–516 (SRFD) is the Arginine finger element.

The protein belongs to the MCM family. Component of the mcm2-7 complex (RLF-M). The complex forms a toroidal hexameric ring with the proposed subunit order mcm2-mcm6-mcm4-mcm7-mcm3-mcm5. The heterodimer of mmcm3/mcm5 interacts with mcm4, mmcm6, mcm7 and weakly with mcm2. Component of the CMG helicase complex, composed of the mcm2-7 complex, the GINS complex and cdc45.

Its subcellular location is the nucleus. It is found in the chromosome. It carries out the reaction ATP + H2O = ADP + phosphate + H(+). In terms of biological role, acts as a component of the MCM2-7 complex (MCM complex) which is the replicative helicase essential for 'once per cell cycle' DNA replication initiation and elongation in eukaryotic cells. Core component of CDC45-MCM-GINS (CMG) helicase, the molecular machine that unwinds template DNA during replication, and around which the replisome is built. The active ATPase sites in the MCM2-7 ring are formed through the interaction surfaces of two neighboring subunits such that a critical structure of a conserved arginine finger motif is provided in trans relative to the ATP-binding site of the Walker A box of the adjacent subunit. The six ATPase active sites, however, are likely to contribute differentially to the complex helicase activity. In Xenopus laevis (African clawed frog), this protein is DNA replication licensing factor mcm5-B (mcm5-b).